A 159-amino-acid polypeptide reads, in one-letter code: Large ribosomal subunit protein mL50 (159 aa).

This sequence belongs to the mitochondrion-specific ribosomal protein mL50 family. As to quaternary structure, component of the mitochondrial ribosome large subunit (39S) which comprises a 16S rRNA and about 50 distinct proteins.

It localises to the mitochondrion. This is Large ribosomal subunit protein mL50 (MRPL50) from Bos taurus (Bovine).